A 303-amino-acid chain; its full sequence is Imidazoleglycerol-phosphate dehydratase (303 aa).

The protein belongs to the imidazoleglycerol-phosphate dehydratase family.

It is found in the cytoplasm. It carries out the reaction D-erythro-1-(imidazol-4-yl)glycerol 3-phosphate = 3-(imidazol-4-yl)-2-oxopropyl phosphate + H2O. It functions in the pathway amino-acid biosynthesis; L-histidine biosynthesis; L-histidine from 5-phospho-alpha-D-ribose 1-diphosphate: step 6/9. The polypeptide is Imidazoleglycerol-phosphate dehydratase (Neisseria gonorrhoeae (strain ATCC 700825 / FA 1090)).